Consider the following 160-residue polypeptide: Endoribonuclease YbeY (160 aa).

Zn(2+) is bound by residues histidine 112, histidine 116, and histidine 122.

Belongs to the endoribonuclease YbeY family. The cofactor is Zn(2+).

The protein resides in the cytoplasm. Functionally, single strand-specific metallo-endoribonuclease involved in late-stage 70S ribosome quality control and in maturation of the 3' terminus of the 16S rRNA. The sequence is that of Endoribonuclease YbeY from Maricaulis maris (strain MCS10) (Caulobacter maris).